The sequence spans 123 residues: Large ribosomal subunit protein bL12 (123 aa).

The protein belongs to the bacterial ribosomal protein bL12 family. Homodimer. Part of the ribosomal stalk of the 50S ribosomal subunit. Forms a multimeric L10(L12)X complex, where L10 forms an elongated spine to which 2 to 4 L12 dimers bind in a sequential fashion. Binds GTP-bound translation factors.

In terms of biological role, forms part of the ribosomal stalk which helps the ribosome interact with GTP-bound translation factors. Is thus essential for accurate translation. In Parvibaculum lavamentivorans (strain DS-1 / DSM 13023 / NCIMB 13966), this protein is Large ribosomal subunit protein bL12.